The chain runs to 154 residues: Spermatogenesis-associated protein 19, mitochondrial (154 aa).

The transit peptide at 1 to 24 (MIITTWIMYIFARKTVGLPFPPRV) directs the protein to the mitochondrion. 2 positions are modified to phosphoserine: Ser-26 and Ser-116.

Expressed specifically in adult testis (at protein level).

The protein localises to the mitochondrion outer membrane. It localises to the mitochondrion. The protein resides in the cell projection. It is found in the cilium. Its subcellular location is the flagellum. Functionally, essential for sperm motility and male fertility. Plays an important role in sperm motility by regulating the organization and function of the mitochondria and is also required for correct sperm midpiece assembly. The chain is Spermatogenesis-associated protein 19, mitochondrial (Spata19) from Mus musculus (Mouse).